A 99-amino-acid polypeptide reads, in one-letter code: Large ribosomal subunit protein bL21 (99 aa).

Belongs to the bacterial ribosomal protein bL21 family. In terms of assembly, part of the 50S ribosomal subunit. Contacts protein L20.

Its function is as follows. This protein binds to 23S rRNA in the presence of protein L20. The polypeptide is Large ribosomal subunit protein bL21 (Anaplasma phagocytophilum (strain HZ)).